We begin with the raw amino-acid sequence, 140 residues long: Large ribosomal subunit protein uL16 (140 aa).

The span at 1–16 (MLMPKRVKHRKQMKGR) shows a compositional bias: basic residues. Positions 1–20 (MLMPKRVKHRKQMKGRMKGD) are disordered.

It belongs to the universal ribosomal protein uL16 family. As to quaternary structure, part of the 50S ribosomal subunit.

Functionally, binds 23S rRNA and is also seen to make contacts with the A and possibly P site tRNAs. The chain is Large ribosomal subunit protein uL16 from Geobacter sulfurreducens (strain ATCC 51573 / DSM 12127 / PCA).